Reading from the N-terminus, the 95-residue chain is Co-chaperonin GroES (95 aa).

The protein belongs to the GroES chaperonin family. As to quaternary structure, heptamer of 7 subunits arranged in a ring. Interacts with the chaperonin GroEL.

It is found in the cytoplasm. Its function is as follows. Together with the chaperonin GroEL, plays an essential role in assisting protein folding. The GroEL-GroES system forms a nano-cage that allows encapsulation of the non-native substrate proteins and provides a physical environment optimized to promote and accelerate protein folding. GroES binds to the apical surface of the GroEL ring, thereby capping the opening of the GroEL channel. The chain is Co-chaperonin GroES from Francisella tularensis subsp. tularensis (strain FSC 198).